The sequence spans 247 residues: Cytochrome c oxidase subunit 2 (247 aa).

Over 12 to 38 (DVPTPWGLYFQDSSTPNQEGIIELHDN) the chain is Mitochondrial intermembrane. Residues 39–59 (IMFYLVLILCTVSWLLFSIVK) form a helical membrane-spanning segment. Residues 60-78 (DSSKNPLPHKYLVHGQTIE) are Mitochondrial matrix-facing. A helical transmembrane segment spans residues 79–101 (IIWTILPAVVLLIIAFPSFILLY). The Mitochondrial intermembrane portion of the chain corresponds to 102–247 (LCDEVISPAM…KEFLTWLNEQ (146 aa)). Cu cation-binding residues include His182, Cys217, Glu219, Cys221, His225, and Met228. Residue Glu219 participates in Mg(2+) binding.

Belongs to the cytochrome c oxidase subunit 2 family. Component of the cytochrome c oxidase (complex IV, CIV), a multisubunit enzyme composed of a catalytic core of 3 subunits and several supernumerary subunits. The complex exists as a monomer or a dimer and forms supercomplexes (SCs) in the inner mitochondrial membrane with ubiquinol-cytochrome c oxidoreductase (cytochrome b-c1 complex, complex III, CIII). The cofactor is Cu cation. Post-translationally, the signal sequence of COX2 is processed by IMP1.

It localises to the mitochondrion inner membrane. The enzyme catalyses 4 Fe(II)-[cytochrome c] + O2 + 8 H(+)(in) = 4 Fe(III)-[cytochrome c] + 2 H2O + 4 H(+)(out). Component of the cytochrome c oxidase, the last enzyme in the mitochondrial electron transport chain which drives oxidative phosphorylation. The respiratory chain contains 3 multisubunit complexes succinate dehydrogenase (complex II, CII), ubiquinol-cytochrome c oxidoreductase (cytochrome b-c1 complex, complex III, CIII) and cytochrome c oxidase (complex IV, CIV), that cooperate to transfer electrons derived from NADH and succinate to molecular oxygen, creating an electrochemical gradient over the inner membrane that drives transmembrane transport and the ATP synthase. Cytochrome c oxidase is the component of the respiratory chain that catalyzes the reduction of oxygen to water. Electrons originating from reduced cytochrome c in the intermembrane space (IMS) are transferred via the dinuclear copper A center (CU(A)) of subunit 2 and heme A of subunit 1 to the active site in subunit 1, a binuclear center (BNC) formed by heme A3 and copper B (CU(B)). The BNC reduces molecular oxygen to 2 water molecules using 4 electrons from cytochrome c in the IMS and 4 protons from the mitochondrial matrix. In Cyberlindnera saturnus (Yeast), this protein is Cytochrome c oxidase subunit 2 (COX2).